The following is a 374-amino-acid chain: PqqA peptide cyclase (374 aa).

The 221-residue stretch at 4-224 folds into the Radical SAM core domain; it reads IEPPMGLLAE…ERLKGVMVID (221 aa). Residues Cys18, Cys22, and Cys25 each coordinate [4Fe-4S] cluster.

Belongs to the radical SAM superfamily. PqqE family. As to quaternary structure, interacts with PqqD. The interaction is necessary for activity of PqqE. The cofactor is [4Fe-4S] cluster.

It catalyses the reaction [PQQ precursor protein] + S-adenosyl-L-methionine = E-Y cross-linked-[PQQ precursor protein] + 5'-deoxyadenosine + L-methionine + H(+). It functions in the pathway cofactor biosynthesis; pyrroloquinoline quinone biosynthesis. In terms of biological role, catalyzes the cross-linking of a glutamate residue and a tyrosine residue in the PqqA protein as part of the biosynthesis of pyrroloquinoline quinone (PQQ). This chain is PqqA peptide cyclase, found in Granulibacter bethesdensis (strain ATCC BAA-1260 / CGDNIH1).